The chain runs to 295 residues: Acetylglutamate kinase (295 aa).

Substrate is bound by residues 66–67, Arg-88, and Asn-193; that span reads GG.

Belongs to the acetylglutamate kinase family. ArgB subfamily.

Its subcellular location is the cytoplasm. The enzyme catalyses N-acetyl-L-glutamate + ATP = N-acetyl-L-glutamyl 5-phosphate + ADP. It participates in amino-acid biosynthesis; L-arginine biosynthesis; N(2)-acetyl-L-ornithine from L-glutamate: step 2/4. Its function is as follows. Catalyzes the ATP-dependent phosphorylation of N-acetyl-L-glutamate. The chain is Acetylglutamate kinase from Afipia carboxidovorans (strain ATCC 49405 / DSM 1227 / KCTC 32145 / OM5) (Oligotropha carboxidovorans).